The following is a 778-amino-acid chain: Glutathione biosynthesis bifunctional protein GshAB (778 aa).

Residues Met-1–Val-354 form a glutamate--cysteine ligase region. Residues Lys-521–Phe-777 form the ATP-grasp domain. Arg-548–Arg-606 is an ATP binding site. 3 residues coordinate Mg(2+): Asp-728, Glu-747, and Asn-749. Residues Asp-728, Glu-747, and Asn-749 each contribute to the Mn(2+) site.

The protein in the N-terminal section; belongs to the glutamate--cysteine ligase type 1 family. Type 2 subfamily. As to quaternary structure, monomer. Mg(2+) serves as cofactor. Requires Mn(2+) as cofactor.

The catalysed reaction is L-cysteine + L-glutamate + ATP = gamma-L-glutamyl-L-cysteine + ADP + phosphate + H(+). The enzyme catalyses gamma-L-glutamyl-L-cysteine + glycine + ATP = glutathione + ADP + phosphate + H(+). The protein operates within sulfur metabolism; glutathione biosynthesis; glutathione from L-cysteine and L-glutamate: step 1/2. It participates in sulfur metabolism; glutathione biosynthesis; glutathione from L-cysteine and L-glutamate: step 2/2. In terms of biological role, synthesizes glutathione from L-glutamate and L-cysteine via gamma-L-glutamyl-L-cysteine. The sequence is that of Glutathione biosynthesis bifunctional protein GshAB from Clostridium perfringens (strain 13 / Type A).